Consider the following 382-residue polypeptide: Inactive serine protease 54 (382 aa).

Positions 1–20 (MAELRGILLLLLYMSHSSSA) are cleaved as a signal peptide. A Peptidase S1 domain is found at 29 to 258 (IVDQLHENLV…YSNWIIAKTR (230 aa)). N-linked (GlcNAc...) asparagine glycosylation is present at N113. 3 disulfides stabilise this stretch: C154-C216, C185-C195, and C206-C237.

This sequence belongs to the peptidase S1 family. Plasma kallikrein subfamily.

The protein resides in the secreted. The chain is Inactive serine protease 54 (Prss54) from Rattus norvegicus (Rat).